We begin with the raw amino-acid sequence, 206 residues long: Outer-membrane lipoprotein LolB (206 aa).

Residues Met-1–Ala-18 form the signal peptide. Cys-19 carries the N-palmitoyl cysteine lipid modification. Cys-19 carries the S-diacylglycerol cysteine lipid modification.

It belongs to the LolB family. In terms of assembly, monomer.

It localises to the cell outer membrane. Functionally, plays a critical role in the incorporation of lipoproteins in the outer membrane after they are released by the LolA protein. This Haemophilus influenzae (strain PittGG) protein is Outer-membrane lipoprotein LolB.